A 165-amino-acid chain; its full sequence is 3-hydroxyacyl-[acyl-carrier-protein] dehydratase FERN, mitochondrial (165 aa).

The N-terminal 35 residues, 1-35, are a transit peptide targeting the mitochondrion; it reads MLMKRLFSSSHVFSSSSASSNLLKIGSVLKQARTF. In terms of domain architecture, MaoC-like spans 36–124; it reads ADDDVLGYSK…AVSIRQIKNK (89 aa).

In terms of assembly, homodimer.

The protein resides in the mitochondrion. The enzyme catalyses a (3R)-hydroxyacyl-[ACP] = a (2E)-enoyl-[ACP] + H2O. The protein operates within lipid metabolism; fatty acid biosynthesis. Functionally, 3-hydroxyl-[acyl-carrier-protein] (3-hydroxyl-ACP) dehydratase required for mitochondrial fatty acid synthesis (mtFAS). Essential for photorespiration, tomato morphogenesis and plant development, probably by influencing mitochondrial membrane lipid composition and other lipid metabolic pathways, and by contributing to energy supply and reactive oxygen species (ROS) homeostasis. The chain is 3-hydroxyacyl-[acyl-carrier-protein] dehydratase FERN, mitochondrial from Solanum lycopersicum (Tomato).